Reading from the N-terminus, the 290-residue chain is Shikimate dehydrogenase (NADP(+)) (290 aa).

Shikimate-binding positions include 20–22 (SLS) and threonine 67. Catalysis depends on lysine 71, which acts as the Proton acceptor. 2 residues coordinate shikimate: asparagine 92 and aspartate 107. NADP(+) contacts are provided by residues 132–136 (GAGGA) and methionine 228. Tyrosine 230 lines the shikimate pocket. Residue glycine 251 coordinates NADP(+).

The protein belongs to the shikimate dehydrogenase family. In terms of assembly, homodimer.

The enzyme catalyses shikimate + NADP(+) = 3-dehydroshikimate + NADPH + H(+). It participates in metabolic intermediate biosynthesis; chorismate biosynthesis; chorismate from D-erythrose 4-phosphate and phosphoenolpyruvate: step 4/7. In terms of biological role, involved in the biosynthesis of the chorismate, which leads to the biosynthesis of aromatic amino acids. Catalyzes the reversible NADPH linked reduction of 3-dehydroshikimate (DHSA) to yield shikimate (SA). This is Shikimate dehydrogenase (NADP(+)) from Citrifermentans bemidjiense (strain ATCC BAA-1014 / DSM 16622 / JCM 12645 / Bem) (Geobacter bemidjiensis).